Reading from the N-terminus, the 316-residue chain is Serpentine receptor class delta-48 (316 aa).

7 helical membrane passes run 8–28 (FFYI…IFVI), 42–62 (FLLC…LLQL), 89–109 (LFYV…FITI), 127–147 (VVII…QIDL), 185–205 (FLLT…GFFI), 236–256 (TLQS…YFVV), and 269–289 (ILPV…LYSV).

This sequence belongs to the nematode receptor-like protein srd family.

It localises to the membrane. This chain is Serpentine receptor class delta-48 (srd-48), found in Caenorhabditis elegans.